The primary structure comprises 499 residues: Glutamyl-tRNA(Gln) amidotransferase subunit A (499 aa).

Residues Lys-75 and Ser-150 each act as charge relay system in the active site. Ser-174 (acyl-ester intermediate) is an active-site residue.

It belongs to the amidase family. GatA subfamily. In terms of assembly, heterotrimer of A, B and C subunits.

The enzyme catalyses L-glutamyl-tRNA(Gln) + L-glutamine + ATP + H2O = L-glutaminyl-tRNA(Gln) + L-glutamate + ADP + phosphate + H(+). In terms of biological role, allows the formation of correctly charged Gln-tRNA(Gln) through the transamidation of misacylated Glu-tRNA(Gln) in organisms which lack glutaminyl-tRNA synthetase. The reaction takes place in the presence of glutamine and ATP through an activated gamma-phospho-Glu-tRNA(Gln). This is Glutamyl-tRNA(Gln) amidotransferase subunit A from Ralstonia pickettii (strain 12J).